A 122-amino-acid chain; its full sequence is Large ribosomal subunit protein bL12 (122 aa).

The protein belongs to the bacterial ribosomal protein bL12 family. In terms of assembly, homodimer. Part of the ribosomal stalk of the 50S ribosomal subunit. Forms a multimeric L10(L12)X complex, where L10 forms an elongated spine to which 2 to 4 L12 dimers bind in a sequential fashion. Binds GTP-bound translation factors.

Its function is as follows. Forms part of the ribosomal stalk which helps the ribosome interact with GTP-bound translation factors. Is thus essential for accurate translation. This Dichelobacter nodosus (strain VCS1703A) protein is Large ribosomal subunit protein bL12.